The sequence spans 253 residues: MRATWKGSISFGLVNIPVKVYKATTQKEIQFHLLHSADGGRIRYRKVCEKCGKEVSDGEIVKGYEISKNEYVILTDEDFEKIPLKSTKSIEIRQFFDPAELGLIYYSSFYYISPDKGGEKAYYLLKKAMEETNSMGIGKMTMRGKENLVALRPYDGGIVLAQLHYIDEVRSPLELPGWGAVAEITEEELELAKKLILAMKKPLKLEEFRDEYKEALMQLIEAKLSGREIVVSEGVEEVKSLIDALKASLEAVK.

The 184-residue stretch at 9–192 (ISFGLVNIPV…EITEEELELA (184 aa)) folds into the Ku domain.

This sequence belongs to the prokaryotic Ku family. Homodimer. Interacts with LigD.

Its function is as follows. With LigD forms a non-homologous end joining (NHEJ) DNA repair enzyme, which repairs dsDNA breaks with reduced fidelity. Binds linear dsDNA with 5'- and 3'- overhangs but not closed circular dsDNA nor ssDNA. Recruits and stimulates the ligase activity of LigD. The protein is Non-homologous end joining protein Ku of Archaeoglobus fulgidus (strain ATCC 49558 / DSM 4304 / JCM 9628 / NBRC 100126 / VC-16).